A 112-amino-acid chain; its full sequence is Putative acyl carrier protein, mitochondrial (112 aa).

Residues 1 to 28 (MLSRFSSQLRFISAVRPVIPKFQPLRFY) constitute a mitochondrion transit peptide. In terms of domain architecture, Carrier spans 33-109 (PDAEKRILKV…DAISYITKNP (77 aa)). Serine 69 bears the O-(pantetheine 4'-phosphoryl)serine mark.

This sequence belongs to the acyl carrier protein (ACP) family. In terms of processing, 4'-phosphopantetheine is transferred from CoA to a specific serine of apo-ACP by acpS. This modification is essential for activity because fatty acids are bound in thioester linkage to the sulfhydryl of the prosthetic group.

The protein resides in the mitochondrion. It participates in lipid metabolism; fatty acid biosynthesis. Its function is as follows. Carrier of the growing fatty acid chain in fatty acid biosynthesis. May be involved in the synthesis of very-long-chain fatty acids. The sequence is that of Putative acyl carrier protein, mitochondrial from Schizosaccharomyces pombe (strain 972 / ATCC 24843) (Fission yeast).